We begin with the raw amino-acid sequence, 79 residues long: RNA-binding protein Hfq (79 aa).

The Sm domain occupies 10-70 (DVFLKTVRKQ…ISTIMPGQPI (61 aa)).

This sequence belongs to the Hfq family. In terms of assembly, homohexamer.

RNA chaperone that binds small regulatory RNA (sRNAs) and mRNAs to facilitate mRNA translational regulation in response to envelope stress, environmental stress and changes in metabolite concentrations. Also binds with high specificity to tRNAs. The chain is RNA-binding protein Hfq from Bartonella bacilliformis (strain ATCC 35685 / KC583 / Herrer 020/F12,63).